The following is a 330-amino-acid chain: Probable integrase/recombinase protein MJ0367 (330 aa).

Positions 22 to 112 constitute a Core-binding (CB) domain; that stretch reads IEETDKIKEY…LLKVFYRVLR (91 aa). Residues 136–325 enclose the Tyr recombinase domain; it reads QHYDAVDAEM…RAESLEFIKK (190 aa). Residues arginine 177, lysine 202, histidine 275, arginine 278, and histidine 301 contribute to the active site. Tyrosine 310 (O-(3'-phospho-DNA)-tyrosine intermediate) is an active-site residue.

Belongs to the 'phage' integrase family.

This is Probable integrase/recombinase protein MJ0367 from Methanocaldococcus jannaschii (strain ATCC 43067 / DSM 2661 / JAL-1 / JCM 10045 / NBRC 100440) (Methanococcus jannaschii).